Here is a 90-residue protein sequence, read N- to C-terminus: MAHKKAGGSSRNGRDSAGKRLGIKAYGGEYVIPGNIIARQRGTTWHPGLNVGMGTDHTLFAKVEGRVEFRAKANGRTFVSVLPIAAEAAE.

The protein belongs to the bacterial ribosomal protein bL27 family.

This chain is Large ribosomal subunit protein bL27, found in Rhodopseudomonas palustris (strain BisB5).